We begin with the raw amino-acid sequence, 428 residues long: Histone deacetylase 3 (428 aa).

The tract at residues 3 to 316 (KTVAYFYDPD…WTYETSLLVD (314 aa)) is histone deacetylase. Histidine 17, glycine 21, and lysine 25 together coordinate 1D-myo-inositol 1,4,5,6-tetrakisphosphate. Residue histidine 135 is part of the active site. Residues aspartate 170, histidine 172, and aspartate 259 each contribute to the Zn(2+) site. Position 265 (arginine 265) interacts with 1D-myo-inositol 1,4,5,6-tetrakisphosphate. 2 stretches are compositionally biased toward basic and acidic residues: residues 386 to 405 (SYER…DNYS) and 415 to 428 (DGDH…DVEI). Residues 386–428 (SYERTDEPDPEERGSEDNYSRPEASNEFYDGDHDNDKESDVEI) are disordered.

Belongs to the histone deacetylase family. HD type 1 subfamily.

The protein resides in the nucleus. It is found in the chromosome. Its subcellular location is the cytoplasm. The protein localises to the cytosol. The enzyme catalyses N(6)-acetyl-L-lysyl-[histone] + H2O = L-lysyl-[histone] + acetate. The catalysed reaction is N(6)-acetyl-L-lysyl-[protein] + H2O = L-lysyl-[protein] + acetate. It carries out the reaction N(6)-(2E)-butenoyl-L-lysyl-[protein] + H2O = (2E)-2-butenoate + L-lysyl-[protein]. It catalyses the reaction N(6)-(2-hydroxyisobutanoyl)-L-lysyl-[protein] + H2O = 2-hydroxy-2-methylpropanoate + L-lysyl-[protein]. The enzyme catalyses N(6)-[(S)-lactoyl]-L-lysyl-[protein] + H2O = (S)-lactate + L-lysyl-[protein]. Inositol tetraphosphate (1D-myo-inositol 1,4,5,6-tetrakisphosphate) promotes the histone deacetylase activity by acting as an intermolecular glue between hdac3 and N-Cor repressor complex components. Its function is as follows. Histone deacetylase that catalyzes the deacetylation of lysine residues on the N-terminal part of the core histones (H2A, H2B, H3 and H4), and some other non-histone substrates. Histone deacetylation gives a tag for epigenetic repression and plays an important role in transcriptional regulation, cell cycle progression and developmental events. Histone deacetylases act via the formation of large multiprotein complexes, such as N-Cor repressor complex, which activate the histone deacetylase activity. Participates in the BCL6 transcriptional repressor activity by deacetylating the H3 'Lys-27' (H3K27) on enhancer elements, antagonizing EP300 acetyltransferase activity and repressing proximal gene expression. Also functions as a deacetylase for non-histone targets. In addition to protein deacetylase activity, also acts as a protein-lysine deacylase by recognizing other acyl groups: catalyzes removal of (2E)-butenoyl (crotonyl), lactoyl (lactyl) and 2-hydroxyisobutanoyl (2-hydroxyisobutyryl) acyl groups from lysine residues, leading to protein decrotonylation, delactylation and de-2-hydroxyisobutyrylation, respectively. The chain is Histone deacetylase 3 (hdac3) from Xenopus tropicalis (Western clawed frog).